We begin with the raw amino-acid sequence, 388 residues long: Alpha-2A adrenergic receptor (388 aa).

Residues 1 to 22 (MICGANATNGTNATKEYTLLVA) are Extracellular-facing. 3 N-linked (GlcNAc...) asparagine glycosylation sites follow: asparagine 6, asparagine 9, and asparagine 12. The chain crosses the membrane as a helical span at residues 23–48 (LPLSIAVGLLILLIIFGNVLVIIAVF). The Cytoplasmic segment spans residues 49–59 (TSRALRAPQNL). Residues 60 to 85 (FLVSLASADILVATLVMPFSLANELM) traverse the membrane as a helical segment. At 86 to 95 (GMWTFGGVWC) the chain is on the extracellular side. Cysteine 95 and cysteine 169 form a disulfide bridge. Residues 96–118 (EIYLALDVLFCTASITHLCAISL) form a helical membrane-spanning segment. The Cytoplasmic segment spans residues 119–138 (DRYWSITQAIEYNLKRTPQR). Residues 139–162 (IKRIIFIVWIIAAVISCPPLITMK) form a helical membrane-spanning segment. Topologically, residues 163-173 (KSEGDICDINK) are extracellular. A helical transmembrane segment spans residues 174–198 (EKWYIVSSCIGSFFLPCIIMVLVYI). Topologically, residues 199 to 311 (RIYQIAKKRT…RQNREKRFTF (113 aa)) are cytoplasmic. Positions 208-291 (TRAPPGDHRK…PGDGDKTEAC (84 aa)) are disordered. Residues 212–231 (PGDHRKNEVGKKENDPHEKL) show a composition bias toward basic and acidic residues. Over residues 266–275 (LKKKSSKGKT) the composition is skewed to basic residues. The chain crosses the membrane as a helical span at residues 312–337 (VLAVVIGVFVICWFPFFFTYTFTAFC). Residues 338–344 (DCCVPET) lie on the Extracellular side of the membrane. A helical membrane pass occupies residues 345 to 368 (LFKFFFWFGYCNSSLNPIIYTIFN). The Cytoplasmic portion of the chain corresponds to 369-388 (NDFRRSFKKILCRRDKRRVV). Cysteine 380 is lipidated: S-palmitoyl cysteine.

It belongs to the G-protein coupled receptor 1 family. Adrenergic receptor subfamily. ADRA2A sub-subfamily.

It localises to the cell membrane. Alpha-2 adrenergic receptors mediate the catecholamine-induced inhibition of adenylate cyclase through the action of G proteins. The order of potency for this receptor is dexmedetomidine &gt; oxymetazoline = epinephrine &gt; norepinephrine. This is Alpha-2A adrenergic receptor from Danio rerio (Zebrafish).